The sequence spans 40 residues: U4-ctenitoxin-Co1c (40 aa).

Cystine bridges form between Cys3-Cys20, Cys10-Cys26, Cys19-Cys40, and Cys28-Cys38.

Expressed by the venom gland.

Its subcellular location is the secreted. Functionally, not toxic to mice by intracerebroventricular injection. The protein is U4-ctenitoxin-Co1c of Ctenus ornatus (Brazilian spider).